The following is a 355-amino-acid chain: NAD-dependent protein deacylase sirtuin-6 (355 aa).

Ser2 is subject to N-acetylserine. The residue at position 10 (Ser10) is a Phosphoserine; by MAPK8. Positions 27-272 (PEELERKVWE…TRLMKHLGLE (246 aa)) constitute a Deacetylase sirtuin-type domain. Residue Lys33 is modified to N6-acetyllysine. Positions 53, 57, 64, 65, 71, 113, and 133 each coordinate NAD(+). The active-site Proton acceptor is the His133. Cys141, Cys144, and Cys166 together coordinate Zn(2+). Residue Lys170 forms a Glycyl lysine isopeptide (Lys-Gly) (interchain with G-Cter in ubiquitin) linkage. A Zn(2+)-binding site is contributed by Cys177. Residues Gly214, Ser216, Asn240, Gln242, and Val258 each contribute to the NAD(+) site. Positions 284-355 (RALPPLPRPP…KRVKAKAVPS (72 aa)) are disordered. Pro residues predominate over residues 287-296 (PPLPRPPTPK). Thr294 carries the phosphothreonine modification. Phosphoserine occurs at positions 303 and 330. The segment covering 343 to 355 (RPPKRVKAKAVPS) has biased composition (basic residues).

It belongs to the sirtuin family. Class IV subfamily. In terms of assembly, homodimer; binds to nucleosomes and DNA ends as a homodimer. Interacts with RELA; interferes with RELA binding to target DNA. Interacts with SMARCA5; promoting recruitment of SMARCA5/SNF2H to double-strand breaks (DSBs) sites. Interacts with the mTORC2 complex; preventing the ability of SIRT6 to deacetylate FOXO1. Interacts with the CLOCK-BMAL1 complex; recruited by the CLOCK-BMAL1 complex to regulate expression of clock-controlled genes. Interacts with CSNK2A2; preventing CSNK2A2 localization to the nucleus. (Microbial infection) Interacts with Kaposi's sarcoma-associated herpesvirus protein VIRF-1; this interaction prevents SIRT6 deubiquitination by USP10. It depends on Zn(2+) as a cofactor. In terms of processing, acetylated at Lys-33. Deacetylation at Lys-33 by SIRT1 promotes homomultimerization and binding to double-strand breaks (DSBs) sites. Post-translationally, phosphorylation at Ser-10 by MAPK8/JNK1 in response to oxidative stress stimulates the mono-ADP-ribosyltransferase activity on PARP1, leading to PARP1 recruitment to double-strand breaks (DSBs). Monoubiquitinated at Lys-170 by STUB1/CHIP, preventing its degradation by the proteasome. Deubiquitinated by USP10, also preventing its degradation by the proteasome. In terms of processing, sumoylated, leading to specifically decrease ability to deacetylate histone H3 at 'Lys-56' (H3K56ac).

The protein resides in the nucleus. It localises to the chromosome. The protein localises to the telomere. Its subcellular location is the endoplasmic reticulum. It carries out the reaction N(6)-acetyl-L-lysyl-[protein] + NAD(+) + H2O = 2''-O-acetyl-ADP-D-ribose + nicotinamide + L-lysyl-[protein]. The enzyme catalyses N(6)-tetradecanoyl-L-lysyl-[protein] + NAD(+) + H2O = 2''-O-tetradecanoyl-ADP-D-ribose + nicotinamide + L-lysyl-[protein]. The catalysed reaction is N(6)-hexadecanoyl-L-lysyl-[protein] + NAD(+) + H2O = 2''-O-hexadecanoyl-ADP-D-ribose + nicotinamide + L-lysyl-[protein]. It catalyses the reaction L-lysyl-[protein] + NAD(+) = N(6)-(ADP-D-ribosyl)-L-lysyl-[protein] + nicotinamide + H(+). It carries out the reaction L-arginyl-[protein] + NAD(+) = N(omega)-(ADP-D-ribosyl)-L-arginyl-[protein] + nicotinamide + H(+). Its activity is regulated as follows. Compared to the defatty-acylase activity, the protein deacetylase activity is weak in vitro, and requires activation. The histone deacetylase activity is strongly activated upon binding to nucleosomes and chromatin in vivo. Two molecules of SIRT6 associate with the acidic patch of one nucleosome, while the C-terminal disordered region of SIRT6 associates with nucleosomal DNA, leading to efficient histone deacetylation. The protein-lysine deacetylase activity is also activated by long-chain free fatty-acids. The histone deacetylase activity is specifically repressed by long non-coding RNA lncPRESS1, which binds to SIRT6 and prevents chromatin-binding, thereby promoting stem cell pluripotency. Due to its essential role as tumor suppressor and involvement in DNA repair and life span, extensive research is made for the identification of small compound regulators of SIRT6. Nitro-fatty acids (nitro-oleic acid and nitro-conjugated linoleic acid) strongly stimulate the protein-lysine deacetylase activity by forming a covalent Michael adduct formation with Cys-18. Activated by UBCS039 (4-(pyridin-3-yl)-4,5- dihydropyrrolo[1,2-a]quinoxaline). Inhibited by non-selective hydroxamate trichostatin A inhibitor. Deacetylase activity is activated by fluvastatin and quercetin-based compounds. The protein-lysine deacetylase activity, but not the defatty-acylase activity, is specifically activated by MDL-800 and MDL-801 activators in vivo, enhancing the histone deacetylase and tumor suppressor activities. MDL-800 and MDL-801 selectively activate SIRT6 and not other members of the sirtuin family. The binding-mode of MDL-801 is however subject to discussion. In terms of biological role, NAD-dependent protein deacetylase, deacylase and mono-ADP-ribosyltransferase that plays an essential role in DNA damage repair, telomere maintenance, metabolic homeostasis, inflammation, tumorigenesis and aging. Displays protein-lysine deacetylase or defatty-acylase (demyristoylase and depalmitoylase) activity, depending on the context. Acts as a key histone deacetylase by catalyzing deacetylation of histone H3 at 'Lys-9', 'Lys-18' and 'Lys-56' (H3K9ac, H3K18ac and H3K56ac, respectively), suppressing target gene expression of several transcription factors, including NF-kappa-B. Acts as an inhibitor of transcription elongation by mediating deacetylation of H3K9ac and H3K56ac, preventing release of NELFE from chromatin and causing transcriptional pausing. Involved in DNA repair by promoting double-strand break (DSB) repair: acts as a DSB sensor by recognizing and binding DSB sites, leading to (1) recruitment of DNA repair proteins, such as SMARCA5/SNF2H, and (2) deacetylation of histone H3K9ac and H3K56ac. SIRT6 participation to DSB repair is probably involved in extension of life span. Also promotes DNA repair by deacetylating non-histone proteins, such as DDB2 and p53/TP53. Specifically deacetylates H3K18ac at pericentric heterochromatin, thereby maintaining pericentric heterochromatin silencing at centromeres and protecting against genomic instability and cellular senescence. Involved in telomere maintenance by catalyzing deacetylation of histone H3 in telomeric chromatin, regulating telomere position effect and telomere movement in response to DNA damage. Required for embryonic stem cell differentiation by mediating histone deacetylation of H3K9ac. Plays a major role in metabolism by regulating processes such as glycolysis, gluconeogenesis, insulin secretion and lipid metabolism. Inhibits glycolysis via histone deacetylase activity and by acting as a corepressor of the transcription factor HIF1A, thereby controlling the expression of multiple glycolytic genes. Has tumor suppressor activity by repressing glycolysis, thereby inhibiting the Warburg effect. Also regulates glycolysis and tumorigenesis by mediating deacetylation and nuclear export of non-histone proteins, such as isoform M2 of PKM (PKM2). Acts as a negative regulator of gluconeogenesis by mediating deacetylation of non-histone proteins, such as FOXO1 and KAT2A/GCN5. Promotes beta-oxidation of fatty acids during fasting by catalyzing deacetylation of NCOA2, inducing coactivation of PPARA. Acts as a regulator of lipid catabolism in brown adipocytes, both by catalyzing deacetylation of histones and non-histone proteins, such as FOXO1. Also acts as a regulator of circadian rhythms, both by regulating expression of clock-controlled genes involved in lipid and carbohydrate metabolism, and by catalyzing deacetylation of PER2. The defatty-acylase activity is specifically involved in regulation of protein secretion. Has high activity toward long-chain fatty acyl groups and mediates protein-lysine demyristoylation and depalmitoylation of target proteins, such as RRAS2 and TNF, thereby regulating their secretion. Also acts as a mono-ADP-ribosyltransferase by mediating mono-ADP-ribosylation of PARP1, TRIM28/KAP1 or SMARCC2/BAF170. Mono-ADP-ribosyltransferase activity is involved in DNA repair, cellular senescence, repression of LINE-1 retrotransposon elements and regulation of transcription. The chain is NAD-dependent protein deacylase sirtuin-6 from Homo sapiens (Human).